A 101-amino-acid polypeptide reads, in one-letter code: Urease subunit beta (101 aa).

The protein belongs to the urease beta subunit family. As to quaternary structure, heterotrimer of UreA (gamma), UreB (beta) and UreC (alpha) subunits. Three heterotrimers associate to form the active enzyme.

It localises to the cytoplasm. The catalysed reaction is urea + 2 H2O + H(+) = hydrogencarbonate + 2 NH4(+). It participates in nitrogen metabolism; urea degradation; CO(2) and NH(3) from urea (urease route): step 1/1. The polypeptide is Urease subunit beta (Burkholderia orbicola (strain AU 1054)).